We begin with the raw amino-acid sequence, 121 residues long: MIQQETFLTVADNSGAKRLQCIRVLGSNRRYAHVGDVIVASVKDAMPNMGVKKSDVVKAVVVRTRATMRRETGNSIRFDDNAAVLINDDQNPRGTRVFGPVARELRERNFTKIVSLAPEVI.

This sequence belongs to the universal ribosomal protein uL14 family. Part of the 50S ribosomal subunit. Forms a cluster with proteins L3 and L19. In the 70S ribosome, L14 and L19 interact and together make contacts with the 16S rRNA in bridges B5 and B8.

Functionally, binds to 23S rRNA. Forms part of two intersubunit bridges in the 70S ribosome. This is Large ribosomal subunit protein uL14 from Prochlorococcus marinus (strain NATL1A).